The chain runs to 265 residues: uncharacterized protein (265 aa).

An N-terminal signal peptide occupies residues Met1–Leu20. Residues Ile192–Leu212 form a helical membrane-spanning segment.

It localises to the membrane. This is an uncharacterized protein from Homo sapiens (Human).